A 271-amino-acid chain; its full sequence is MTTTAKTDDIPIDTVILDIEGTVCPITFVKDTLFPYFIEKLPSILDKFQYPLSNTSASSDDQVLNILKQLPDNITKSSESIYKHFKNLVDQDIKDPILKSLQGLIWKQGYENNELQAPIYQDSVEFIESFPTKSSTNNKIYIYSSGSIKAQILLFGHVKSTTTTTTTTTTITNEVIDLNPKLNGYFDITTAGFKNQSNSYKKILQEINKSSTPKSVLFLSDNINEVNAAIEAGMKSYIVIRPGNPPIDDDDDGNDDKINHKIIYSLDELDL.

The Mg(2+) site is built by Asp-18 and Glu-20. Residues 144-145 and Lys-194 contribute to the substrate site; that span reads SS. Asp-221 provides a ligand contact to Mg(2+).

This sequence belongs to the HAD-like hydrolase superfamily. MasA/MtnC family. As to quaternary structure, monomer. The cofactor is Mg(2+).

It localises to the cytoplasm. The protein localises to the nucleus. It catalyses the reaction 5-methylsulfanyl-2,3-dioxopentyl phosphate + H2O = 1,2-dihydroxy-5-(methylsulfanyl)pent-1-en-3-one + phosphate. It functions in the pathway amino-acid biosynthesis; L-methionine biosynthesis via salvage pathway; L-methionine from S-methyl-5-thio-alpha-D-ribose 1-phosphate: step 3/6. Its pathway is amino-acid biosynthesis; L-methionine biosynthesis via salvage pathway; L-methionine from S-methyl-5-thio-alpha-D-ribose 1-phosphate: step 4/6. Bifunctional enzyme that catalyzes the enolization of 2,3-diketo-5-methylthiopentyl-1-phosphate (DK-MTP-1-P) into the intermediate 2-hydroxy-3-keto-5-methylthiopentenyl-1-phosphate (HK-MTPenyl-1-P), which is then dephosphorylated to form the acireductone 1,2-dihydroxy-3-keto-5-methylthiopentene (DHK-MTPene). This Candida albicans (strain WO-1) (Yeast) protein is Enolase-phosphatase E1.